A 62-amino-acid polypeptide reads, in one-letter code: Alpha-conotoxin-like Qc1.2 (62 aa).

Residues 1–21 form the signal peptide; sequence MGMRMMFTVFLLVALATTVAS. A propeptide spanning residues 22–48 is cleaved from the precursor; that stretch reads FTLDRASNGRNAAADDKPSDWIALAIK. The residue at position 49 (Q49) is a Pyrrolidone carboxylic acid. Intrachain disulfides connect C50/C56 and C51/C61.

It belongs to the conotoxin A superfamily. As to expression, expressed by the venom duct.

The protein resides in the secreted. In terms of biological role, alpha-conotoxins bind to the nicotinic acetylcholine receptors (nAChR) and inhibit them. This synthetic peptide (10 uM) selectively, but weakly inhibits both rat neuronal alpha-3-beta-2/CHRNA3-CHRNB2 (63%) and alpha-3-beta-4/CHRNA3-CHRNB4 (37%) subtypes of nAChR. The polypeptide is Alpha-conotoxin-like Qc1.2 (Conus quercinus (Oak cone)).